Here is a 221-residue protein sequence, read N- to C-terminus: Putative hemin import ATP-binding protein HrtA (221 aa).

In terms of domain architecture, ABC transporter spans 3-221 (LVVKDIVKNF…IELEDGKITD (219 aa)). 39-46 (GASGSGKT) provides a ligand contact to ATP.

The protein belongs to the ABC transporter superfamily. HrtA family. In terms of assembly, the complex is composed of two ATP-binding proteins (HrtA), two transmembrane proteins (HrtB) and a solute-binding protein.

Its subcellular location is the cell membrane. Functionally, part of the ABC transporter complex hrt involved in hemin import. Responsible for energy coupling to the transport system. This Staphylococcus aureus (strain MRSA252) protein is Putative hemin import ATP-binding protein HrtA (hrtA).